Reading from the N-terminus, the 98-residue chain is Cystatin-B (98 aa).

M1 bears the N-acetylmethionine mark. Residues 46–50 (QIVAG) carry the Secondary area of contact motif.

It belongs to the cystatin family. Widely expressed. Highest expression in heart, liver and kidney. Lower levels in brain, lung and skeletal muscle. Lowest levels in spleen and testis.

It is found in the cytoplasm. This is an intracellular thiol proteinase inhibitor. This Mus musculus (Mouse) protein is Cystatin-B (Cstb).